A 122-amino-acid chain; its full sequence is Large ribosomal subunit protein uL14 (122 aa).

The protein belongs to the universal ribosomal protein uL14 family. In terms of assembly, part of the 50S ribosomal subunit. Forms a cluster with proteins L3 and L19. In the 70S ribosome, L14 and L19 interact and together make contacts with the 16S rRNA in bridges B5 and B8.

Its function is as follows. Binds to 23S rRNA. Forms part of two intersubunit bridges in the 70S ribosome. This is Large ribosomal subunit protein uL14 from Chlorobium phaeobacteroides (strain DSM 266 / SMG 266 / 2430).